The sequence spans 1009 residues: Protein WBSCR14 homolog (1009 aa).

4 disordered regions span residues Met1 to Asp20, Met304 to Met354, Asn488 to Met531, and Ile686 to Ala728. Composition is skewed to polar residues over residues Arg324 to Ser350 and Arg499 to Asp508. Over residues Leu511 to Ser526 the composition is skewed to low complexity. Over residues Ile686 to Asp695 the composition is skewed to polar residues. The 54-residue stretch at Arg803 to Leu856 folds into the bHLH domain. Residues Leu856 to Leu877 form a leucine-zipper region.

Expressed in intestine, neurons, muscle, hypodermis, excretory cell and other tissues.

Its subcellular location is the nucleus. The protein resides in the cytoplasm. It is found in the mitochondrion. Transcription factor that binds to the E box motif 5'-CACGTG-3', probably in a heterodimeric complex with mxl-2. Involved in modulating longevity in response to TOR signaling, dietary restriction, the decline in protein homeostasis associated with normal aging, germline signaling and the insulin-like signaling pathway. Plays a role in autophagy. Involved in regulating migration of the ray 1 precursor cells in the male tail, acting in concert with Wnt and semaphorin signaling pathways. Regulates transcription of genes encoding extracellular matrix (ECM) components which may contribute to the substratum required for migration of the neighboring ray 1 precursor cells. Involved in repressing infection by the microsporidian pathogen N.parisii, probably acting independently of its canonical partner, mxl-2. The protein is Protein WBSCR14 homolog (mml-1) of Caenorhabditis elegans.